The chain runs to 1390 residues: MKAPAVLAPGILVLLFTLVQRSNGECKEALAKSEMNVNMKYQLPNFTAETPIQNVILHEHHIFLGATNYIYVLNEEDLQKVAEYKTGPVLEHPDCFPCQDCSSKANLSGGVWKDNINMALVVDTYYDDQLISCGSVNRGTCQRHVFPHNHTADIQSEVHCIFSPQIEEPSQCPDCVVSALGAKVLSSVKDRFINFFVGNTINSSYFPDHPLHSISVRRLKETKDGFMFLTDQSYIDVLPEFRDSYPIKYVHAFESNNFIYFLTVQRETLDAQTFHTRIIRFCSINSGLHSYMEMPLECILTEKRKKRSTKKEVFNILQAAYVSKPGAQLARQIGASLNDDILFGVFAQSKPDSAEPMDRSAMCAFPIKYVNDFFNKIVNKNNVRCLQHFYGPNHEHCFNRTLLRNSSGCEARRDEYRTEFTTALQRVDLFMGQFSEVLLTSISTFIKGDLTIANLGTSEGRFMQVVVSRSGPSTPHVNFLLDSHPVSPEVIVEHTLNQNGYTLVITGKKITKIPLNGLGCRHFQSCSQCLSAPPFVQCGWCHDKCVRSEECLSGTWTQQICLPAIYKVFPNSAPLEGGTRLTICGWDFGFRRNNKFDLKKTRVLLGNESCTLTLSESTMNTLKCTVGPAMNKHFNMSIIISNGHGTTQYSTFSYVDPVITSISPKYGPMAGGTLLTLTGNYLNSGNSRHISIGGKTCTLKSVSNSILECYTPAQTISTEFAVKLKIDLANRETSIFSYREDPIVYEIHPTKSFISGGSTITGVGKNLNSVSVPRMVINVHEAGRNFTVACQHRSNSEIICCTTPSLQQLNLQLPLKTKAFFMLDGILSKYFDLIYVHNPVFKPFEKPVMISMGNENVLEIKGNDIDPEAVKGEVLKVGNKSCENIHLHSEAVLCTVPNDLLKLNSELNIEWKQAISSTVLGKVIVQPDQNFTGLIAGVVSISTALLLLLGFFLWLKKRKQIKDLGSELVRYDARVHTPHLDRLVSARSVSPTTEMVSNESVDYRATFPEDQFPNSSQNGSCRQVQYPLTDMSPILTSGDSDISSPLLQNTVHIDLSALNPELVQAVQHVVIGPSSLIVHFNEVIGRGHFGCVYHGTLLDNDGKKIHCAVKSLNRITDIGEVSQFLTEGIIMKDFSHPNVLSLLGICLRSEGSPLVVLPYMKHGDLRNFIRNETHNPTVKDLIGFGLQVAKGMKYLASKKFVHRDLAARNCMLDEKFTVKVADFGLARDMYDKEYYSVHNKTGAKLPVKWMALESLQTQKFTTKSDVWSFGVLLWELMTRGAPPYPDVNTFDITVYLLQGRRLLQPEYCPDPLYEVMLKCWHPKAEMRPSFSELVSRISAIFSTFIGEHYVHVNATYVNVKCVAPYPSLLSSEDNADDEVDTRPASFWETS.

An N-terminal signal peptide occupies residues 1–24; that stretch reads MKAPAVLAPGILVLLFTLVQRSNG. Residues 25 to 932 lie on the Extracellular side of the membrane; the sequence is ECKEALAKSE…VIVQPDQNFT (908 aa). One can recognise a Sema domain in the interval 27 to 515; the sequence is KEALAKSEMN…TGKKITKIPL (489 aa). N-linked (GlcNAc...) asparagine glycosylation is present at N45. Disulfide bonds link C95/C101, C98/C160, C133/C141, and C172/C175. An N-linked (GlcNAc...) asparagine glycan is attached at N106. Residue N149 is glycosylated (N-linked (GlcNAc...) asparagine). N202 carries an N-linked (GlcNAc...) asparagine glycan. 2 disulfides stabilise this stretch: C298–C363 and C385–C397. N399 and N405 each carry an N-linked (GlcNAc...) asparagine glycan. 4 disulfides stabilise this stretch: C520–C538, C526–C561, C529–C545, and C541–C551. 3 consecutive IPT/TIG domains span residues 563-655, 657-739, and 742-836; these read PAIY…FSYV, PVIT…FSYR, and PIVY…LIYV. O-linked (Man) threonine glycosylation occurs at T582. N-linked (GlcNAc...) asparagine glycosylation is present at N607. A disulfide bridge connects residues C610 and C624. The N-linked (GlcNAc...) asparagine glycan is linked to N635. T676 carries an O-linked (Man) threonine glycan. A disulfide bridge links C697 with C709. T761 is a glycosylation site (O-linked (Man) threonine). N-linked (GlcNAc...) asparagine glycans are attached at residues N785, N879, and N930. The chain crosses the membrane as a helical span at residues 933–955; sequence GLIAGVVSISTALLLLLGFFLWL. Over 956–1390 the chain is Cytoplasmic; the sequence is KKRKQIKDLG…TRPASFWETS (435 aa). The residue at position 966 (S966) is a Phosphoserine. At T977 the chain carries Phosphothreonine. A phosphoserine mark is found at S990, S997, and S1000. Residue Y1003 is modified to Phosphotyrosine. Positions 1078 to 1345 constitute a Protein kinase domain; sequence VHFNEVIGRG…RISAIFSTFI (268 aa). ATP-binding positions include 1084-1092 and K1110; that span reads IGRGHFGCV. The Proton acceptor role is filled by D1204. Positions 1212–1390 are interaction with RANBP9; it reads LDEKFTVKVA…TRPASFWETS (179 aa). At Y1230 the chain carries Phosphotyrosine. Residues Y1234 and Y1235 each carry the phosphotyrosine; by autocatalysis modification. A Phosphothreonine modification is found at T1289. Positions 1320–1359 are interaction with MUC20; it reads WHPKAEMRPSFSELVSRISAIFSTFIGEHYVHVNATYVNV. Y1349 and Y1356 each carry phosphotyrosine; by autocatalysis. Phosphotyrosine is present on Y1365.

It belongs to the protein kinase superfamily. Tyr protein kinase family. In terms of assembly, heterodimer made of an alpha chain (50 kDa) and a beta chain (145 kDa) which are disulfide linked. Binds PLXNB1. Interacts when phosphorylated with downstream effectors including STAT3, PIK3R1, SRC, PCLG1, GRB2 and GAB1. Interacts with SPSB1, SPSB2 and SPSB4. Interacts with INPP5D/SHIP1. When phosphorylated at Tyr-1356, interacts with INPPL1/SHIP2. Interacts with RANBP9 and RANBP10, as well as SPSB1, SPSB2, SPSB3 and SPSB4. SPSB1 binding occurs in the presence and in the absence of HGF, however HGF treatment has a positive effect on this interaction. Interacts with MUC20; prevents interaction with GRB2 and suppresses hepatocyte growth factor-induced cell proliferation. Interacts with GRB10. Interacts with PTPN1 and PTPN2. Interacts with LECT2; this interaction may have an antagonistic effect on receptor activation. Interacts with HSP90AA1 and HSP90AB1; the interaction suppresses MET kinase activity. Interacts with tensin TNS3. Interacts (when phosphorylated) with tensin TNS4 (via SH2 domain); the interaction increases MET protein stability by inhibiting MET endocytosis and subsequent lysosomal degradation. As to quaternary structure, (Microbial infection) Interacts via extracytoplasmic residues 25-656 with L.monocytogenes InlB; MET can bind HGF, its endogenous ligand, and InlB simultaneously. InlB probably dimerizes upon binding to MET, which encourages subsequent dimerization of MET. Post-translationally, autophosphorylated in response to ligand binding on Tyr-1234 and Tyr-1235 in the kinase domain leading to further phosphorylation of Tyr-1349 and Tyr-1356 in the C-terminal multifunctional docking site. Dephosphorylated by PTPRJ at Tyr-1349 and Tyr-1365. Dephosphorylated by PTPN1 and PTPN2. In terms of processing, ubiquitinated. Ubiquitination by CBL regulates MET endocytosis, resulting in decreasing plasma membrane receptor abundance, and in endosomal degradation and/or recycling of internalized receptors. O-mannosylation of IPT/TIG domains by TMEM260 is required for protein maturation. O-mannosylated residues are composed of single mannose glycans that are not elongated or modified. Post-translationally, (Microbial infection) Tyrosine phosphorylation is stimulated by L.monocytogenes InlB. Tyrosine phosphorylation is maximal 10-20 minutes after treatment with InlB and disappears by 60 minutes. The phosphorylated residues were not identified. As to expression, expressed in normal hepatocytes as well as in epithelial cells lining the stomach, the small and the large intestine. Found also in basal keratinocytes of esophagus and skin. High levels are found in liver, gastrointestinal tract, thyroid and kidney. Also present in the brain. Expressed in metaphyseal bone (at protein level).

It is found in the membrane. The protein resides in the secreted. It catalyses the reaction L-tyrosyl-[protein] + ATP = O-phospho-L-tyrosyl-[protein] + ADP + H(+). With respect to regulation, in its inactive state, the C-terminal tail interacts with the catalytic domain and inhibits the kinase activity. Upon ligand binding, the C-terminal tail is displaced and becomes phosphorylated, thus increasing the kinase activity. Its function is as follows. Receptor tyrosine kinase that transduces signals from the extracellular matrix into the cytoplasm by binding to hepatocyte growth factor/HGF ligand. Regulates many physiological processes including proliferation, scattering, morphogenesis and survival. Ligand binding at the cell surface induces autophosphorylation of MET on its intracellular domain that provides docking sites for downstream signaling molecules. Following activation by ligand, interacts with the PI3-kinase subunit PIK3R1, PLCG1, SRC, GRB2, STAT3 or the adapter GAB1. Recruitment of these downstream effectors by MET leads to the activation of several signaling cascades including the RAS-ERK, PI3 kinase-AKT, or PLCgamma-PKC. The RAS-ERK activation is associated with the morphogenetic effects while PI3K/AKT coordinates prosurvival effects. During embryonic development, MET signaling plays a role in gastrulation, development and migration of neuronal precursors, angiogenesis and kidney formation. During skeletal muscle development, it is crucial for the migration of muscle progenitor cells and for the proliferation of secondary myoblasts. In adults, participates in wound healing as well as organ regeneration and tissue remodeling. Also promotes differentiation and proliferation of hematopoietic cells. May regulate cortical bone osteogenesis. Functionally, (Microbial infection) Acts as a receptor for Listeria monocytogenes internalin InlB, mediating entry of the pathogen into cells. The protein is Hepatocyte growth factor receptor (MET) of Homo sapiens (Human).